The primary structure comprises 70 residues: NADH dehydrogenase [ubiquinone] 1 alpha subcomplex subunit 1 (70 aa).

The helical transmembrane segment at 1–21 threads the bilayer; that stretch reads MWFEVLPGIAVMGVCLFIPGM.

This sequence belongs to the complex I NDUFA1 subunit family. As to quaternary structure, complex I is composed of 45 different subunits.

Its subcellular location is the mitochondrion inner membrane. Functionally, accessory subunit of the mitochondrial membrane respiratory chain NADH dehydrogenase (Complex I), that is believed not to be involved in catalysis. Complex I functions in the transfer of electrons from NADH to the respiratory chain. The immediate electron acceptor for the enzyme is believed to be ubiquinone. This is NADH dehydrogenase [ubiquinone] 1 alpha subcomplex subunit 1 (NDUFA1) from Bos taurus (Bovine).